A 371-amino-acid polypeptide reads, in one-letter code: Zinc transporter ZIP13 (371 aa).

Residues 1-7 are Lumenal-facing; it reads MPGCPCP. Residues 8–28 traverse the membrane as a helical segment; the sequence is GCGMAGPRLLFLTALALELLE. Residues 29–68 lie on the Cytoplasmic side of the membrane; it reads RAGGSQPALRSRGTATACRLDNKESESWGALLSGERLDTW. Residues 69 to 89 form a helical membrane-spanning segment; the sequence is ICSLLGSLMVGLSGVFPLLVI. The Lumenal portion of the chain corresponds to 90-108; it reads PLEMGTMLRSEAGAWRLKQ. A helical transmembrane segment spans residues 109–129; sequence LLSFALGGLLGNVFLHLLPEA. The Cytoplasmic portion of the chain corresponds to 130–149; that stretch reads WAYTCSASPGGEGQSLQQQQ. Residues 150-170 traverse the membrane as a helical segment; sequence QLGLWVIAGILTFLALEKMFL. The Lumenal portion of the chain corresponds to 171-235; the sequence is DSKEEGTSQA…TIDNFTHGLA (65 aa). A helical membrane pass occupies residues 236–256; that stretch reads VAASFLVSKKIGLLTTMAILL. The short motif at 257 to 262 is the XEXPHE-motif element; it reads HEIPHE. At 257 to 278 the chain is on the cytoplasmic side; it reads HEIPHEVGDFAILLRAGFDRWS. A helical membrane pass occupies residues 279 to 299; it reads AAKLQLSTALGGLLGAGFAIC. The Lumenal segment spans residues 300-316; that stretch reads TQSPKGVVGCSPAAEET. The helical transmembrane segment at 317-337 threads the bilayer; sequence AAWVLPFTSGGFLYIALVNVL. The Cytoplasmic portion of the chain corresponds to 338–349; the sequence is PDLLEEEDPWRS. Residues 350–370 traverse the membrane as a helical segment; it reads LQQLLLLCAGIVVMVLFSLFV. A topological domain (lumenal) is located at residue D371.

This sequence belongs to the ZIP transporter (TC 2.A.5) family. In terms of assembly, homodimer.

Its subcellular location is the golgi apparatus membrane. The protein resides in the cytoplasmic vesicle membrane. It is found in the endoplasmic reticulum membrane. It carries out the reaction Zn(2+)(in) = Zn(2+)(out). Its function is as follows. Functions as a zinc transporter transporting Zn(2+) from the Golgi apparatus to the cytosol and thus influences the zinc level at least in areas of the cytosol. May regulate beige adipocyte differentiation. This is Zinc transporter ZIP13 from Homo sapiens (Human).